Here is a 1149-residue protein sequence, read N- to C-terminus: ATP-dependent helicase/deoxyribonuclease subunit B (1149 aa).

The UvrD-like helicase ATP-binding domain occupies 1-276 (MAIRYIFGRA…INLDIEERKV (276 aa)). ATP is bound at residue 8-15 (GRAGRGKS). In terms of domain architecture, UvrD-like helicase C-terminal spans 273–586 (ERKVLPKEKE…LVGSIERSKS (314 aa)). Residues Cys-786, Cys-1105, Cys-1108, and Cys-1114 each coordinate [4Fe-4S] cluster.

The protein belongs to the helicase family. AddB/RexB type 1 subfamily. As to quaternary structure, heterodimer of AddA and AddB. Requires Mg(2+) as cofactor. It depends on [4Fe-4S] cluster as a cofactor.

Functionally, the heterodimer acts as both an ATP-dependent DNA helicase and an ATP-dependent, dual-direction single-stranded exonuclease. Recognizes the chi site generating a DNA molecule suitable for the initiation of homologous recombination. The AddB subunit has 5' -&gt; 3' nuclease activity but not helicase activity. The chain is ATP-dependent helicase/deoxyribonuclease subunit B from Alkaliphilus metalliredigens (strain QYMF).